A 462-amino-acid polypeptide reads, in one-letter code: uncharacterized protein (462 aa).

The HTH gntR-type domain maps to 22–90 (KPIYKALAGQ…VGSGTFVSYD (69 aa)). The H-T-H motif DNA-binding region spans 50-69 (QRELADYLDLNVSTISKAFK). At K308 the chain carries N6-(pyridoxal phosphate)lysine.

This sequence in the C-terminal section; belongs to the class-I pyridoxal-phosphate-dependent aminotransferase family. Pyridoxal 5'-phosphate is required as a cofactor.

This is an uncharacterized protein from Bacillus subtilis (strain 168).